The chain runs to 384 residues: Probable L-tyrosine/L-aspartate decarboxylase (384 aa).

Position 233 is an N6-(pyridoxal phosphate)lysine (lysine 233).

It belongs to the group II decarboxylase family. MfnA subfamily. Requires pyridoxal 5'-phosphate as cofactor.

It catalyses the reaction L-tyrosine + H(+) = tyramine + CO2. It carries out the reaction L-aspartate + H(+) = beta-alanine + CO2. The protein operates within cofactor biosynthesis; methanofuran biosynthesis. Its pathway is cofactor biosynthesis; coenzyme A biosynthesis. In terms of biological role, catalyzes the decarboxylation of L-tyrosine to produce tyramine for methanofuran biosynthesis. Can also catalyze the decarboxylation of L-aspartate to produce beta-alanine for coenzyme A (CoA) biosynthesis. This is Probable L-tyrosine/L-aspartate decarboxylase from Methanococcus maripaludis (strain DSM 14266 / JCM 13030 / NBRC 101832 / S2 / LL).